The primary structure comprises 122 residues: RxLR effector protein Avh52 (122 aa).

Residues 1-21 (MRLTSILVLVIAATFHTTGTA) form the signal peptide. Positions 50 to 68 (RLLRRVEKDKVDYEQDEQR) match the RxLR-dEER motif. The interval 69-86 (SFGALKDAVKKLNPVTAV) is TAP1-binding. The tract at residues 87-98 (KKFFKQRARRKK) is nuclear localization signal (NLS).

It belongs to the RxLR effector family. As to quaternary structure, interacts with host acetyl transferase TAP1.

It localises to the secreted. It is found in the host nucleus. Effector that suppresses plant defense responses during the early stages of pathogen infection. Suppresses cell death induced by effectors and PAMPs in plant hosts. Interacts with host acetyltransferase TAP1 and causes TAP1 relocation into the nucleus where it acetylates histones H2A and H3 during early infection, thereby promoting susceptibility of host plant to P.sojae. The sequence is that of RxLR effector protein Avh52 from Phytophthora sojae (Soybean stem and root rot agent).